A 588-amino-acid polypeptide reads, in one-letter code: Neopullulanase (588 aa).

Residues N147, N149, S153, G172, and D174 each contribute to the Ca(2+) site. Residues H247 and R326 each contribute to the substrate site. D328 (nucleophile) is an active-site residue. Residue E357 is the Proton donor of the active site. Substrate is bound by residues 423 to 424 (HD), D468, and R472.

The protein belongs to the glycosyl hydrolase 13 family. As to quaternary structure, homodimer. Ca(2+) serves as cofactor.

The enzyme catalyses Hydrolysis of pullulan to panose (6-alpha-D-glucosylmaltose).. In terms of biological role, hydrolyzes pullulan efficiently but only a small amount of starch. Endohydrolysis of 1,4-alpha-glucosidic linkages in pullulan to form panose. Also cleaves (1-6)-alpha-glucosidic linkages to form maltotriose. The protein is Neopullulanase (nplT) of Geobacillus stearothermophilus (Bacillus stearothermophilus).